The following is a 319-amino-acid chain: tRNA uridine(34) hydroxylase (319 aa).

The region spanning 133–231 (EDPDSVVIDT…YLEDVSSENS (99 aa)) is the Rhodanese domain. The active-site Cysteine persulfide intermediate is Cys-191.

The protein belongs to the TrhO family.

It catalyses the reaction uridine(34) in tRNA + AH2 + O2 = 5-hydroxyuridine(34) in tRNA + A + H2O. Its function is as follows. Catalyzes oxygen-dependent 5-hydroxyuridine (ho5U) modification at position 34 in tRNAs. The sequence is that of tRNA uridine(34) hydroxylase from Prochlorococcus marinus (strain NATL1A).